We begin with the raw amino-acid sequence, 125 residues long: Lymphocyte antigen 6 complex locus protein G6c (125 aa).

The first 18 residues, 1 to 18 (MRALLLLSLSALLCWVSA), serve as a signal peptide directing secretion. One can recognise a UPAR/Ly6 domain in the interval 20-111 (IRCHSCYKLP…PRPTPALTLV (92 aa)). Cystine bridges form between C22–C47, C25–C33, and C39–C65. Residue N88 is glycosylated (N-linked (GlcNAc...) asparagine). Cysteines 92 and 97 form a disulfide. Residue S99 is the site of GPI-anchor amidated serine attachment. Residues 100-125 (PAPRPTPALTLVFLTSLAGLGLWLLH) constitute a propeptide, removed in mature form.

Post-translationally, N-glycosylated.

It localises to the cell membrane. This is Lymphocyte antigen 6 complex locus protein G6c (LY6G6C) from Bos taurus (Bovine).